Here is a 293-residue protein sequence, read N- to C-terminus: 4-diphosphocytidyl-2-C-methyl-D-erythritol kinase (293 aa).

Lysine 16 is an active-site residue. Position 99 to 109 (99 to 109 (PMGAGLGGGSS)) interacts with ATP. Aspartate 141 is an active-site residue.

Belongs to the GHMP kinase family. IspE subfamily.

It catalyses the reaction 4-CDP-2-C-methyl-D-erythritol + ATP = 4-CDP-2-C-methyl-D-erythritol 2-phosphate + ADP + H(+). It functions in the pathway isoprenoid biosynthesis; isopentenyl diphosphate biosynthesis via DXP pathway; isopentenyl diphosphate from 1-deoxy-D-xylulose 5-phosphate: step 3/6. Its function is as follows. Catalyzes the phosphorylation of the position 2 hydroxy group of 4-diphosphocytidyl-2C-methyl-D-erythritol. The sequence is that of 4-diphosphocytidyl-2-C-methyl-D-erythritol kinase from Burkholderia multivorans (strain ATCC 17616 / 249).